The following is a 759-amino-acid chain: uncharacterized protein (759 aa).

This is an uncharacterized protein from Escherichia coli (strain K12).